The primary structure comprises 417 residues: Inactive cytochrome P450 76AD1 (417 aa).

Residues 4 to 24 (ATLAMILAIWFISFHFIKLLF) traverse the membrane as a helical segment.

It belongs to the cytochrome P450 family.

It localises to the membrane. The protein operates within pigment biosynthesis; betalain biosynthesis. Inactive cytochrome unable to convert L-DOPA to cyclo-DOPA in the betalain pathway and producing a yellow mutant phenotype. A frameshift replaces 108 amino acids of the active protein found in red beets (AC I3PFJ5) with 27 new residues followed by a stop codon. This Beta vulgaris (Sugar beet) protein is Inactive cytochrome P450 76AD1.